Reading from the N-terminus, the 932-residue chain is Calpain-like protease palB/cpr-8 (932 aa).

Residues 96–419 (KLHGNIFPPW…FDSLYVNWSP (324 aa)) enclose the Calpain catalytic domain. Active-site residues include Cys178, His346, and Asn366. The tract at residues 890 to 932 (QGHVTEGSDDDGGGGGGGGGGVHVEISSDGVVSIGEWEVADED) is disordered. A compositionally biased stretch (gly residues) spans 902–911 (GGGGGGGGGV).

It belongs to the peptidase C2 family. PalB/RIM13 subfamily.

Required for the proteolytic cleavage of the transcription factor pacc-1 in response to alkaline ambient pH. This Neurospora crassa (strain ATCC 24698 / 74-OR23-1A / CBS 708.71 / DSM 1257 / FGSC 987) protein is Calpain-like protease palB/cpr-8 (cpr-8).